We begin with the raw amino-acid sequence, 572 residues long: Proline--tRNA ligase (572 aa).

This sequence belongs to the class-II aminoacyl-tRNA synthetase family. ProS type 1 subfamily. In terms of assembly, homodimer.

Its subcellular location is the cytoplasm. The enzyme catalyses tRNA(Pro) + L-proline + ATP = L-prolyl-tRNA(Pro) + AMP + diphosphate. Its function is as follows. Catalyzes the attachment of proline to tRNA(Pro) in a two-step reaction: proline is first activated by ATP to form Pro-AMP and then transferred to the acceptor end of tRNA(Pro). As ProRS can inadvertently accommodate and process non-cognate amino acids such as alanine and cysteine, to avoid such errors it has two additional distinct editing activities against alanine. One activity is designated as 'pretransfer' editing and involves the tRNA(Pro)-independent hydrolysis of activated Ala-AMP. The other activity is designated 'posttransfer' editing and involves deacylation of mischarged Ala-tRNA(Pro). The misacylated Cys-tRNA(Pro) is not edited by ProRS. The sequence is that of Proline--tRNA ligase from Yersinia pestis (strain Pestoides F).